Here is a 501-residue protein sequence, read N- to C-terminus: Trans-cinnamate 4-monooxygenase (501 aa).

The helical transmembrane segment at 3-23 (LVLLEKALLGLFAAAVLAVAV) threads the bilayer. Residues 213–218 (RSRLSQ) and Ala302 contribute to the (E)-cinnamate site. Cys443 contributes to the heme binding site.

This sequence belongs to the cytochrome P450 family. It depends on heme as a cofactor.

Its subcellular location is the membrane. The catalysed reaction is (E)-cinnamate + reduced [NADPH--hemoprotein reductase] + O2 = (E)-4-coumarate + oxidized [NADPH--hemoprotein reductase] + H2O + H(+). The protein operates within phenylpropanoid metabolism; trans-4-coumarate biosynthesis; trans-4-coumarate from trans-cinnamate: step 1/1. Its function is as follows. Catalyzes the first oxidative step of the phenylpropanoid pathway in higher plants by transforming trans-cinnamate into p-coumarate. The compounds formed by this pathway are essential components for lignification, pollination, and defense against ultraviolet light, predators and pathogens. Can also use 2-naphthoic acid as substrate. The chain is Trans-cinnamate 4-monooxygenase from Sorghum bicolor (Sorghum).